An 895-amino-acid chain; its full sequence is Splicing factor 3B subunit 2 (895 aa).

The segment covering Met1–Lys10 has biased composition (basic and acidic residues). Disordered regions lie at residues Met1–Tyr24, Leu65–Gly136, Ala197–Thr373, and Lys400–Lys453. Lys10 participates in a covalent cross-link: Glycyl lysine isopeptide (Lys-Gly) (interchain with G-Cter in SUMO2). Positions Tyr24–Thr58 constitute an SAP domain. 2 stretches are compositionally biased toward pro residues: residues Ile90–Gly114 and Ala122–Leu133. Residues Ala140–Met199 adopt a coiled-coil conformation. A compositionally biased stretch (low complexity) spans Pro218–Pro238. 3 positions are modified to omega-N-methylarginine: Arg222, Arg245, and Arg247. The span at Ala241–Gly254 shows a compositional bias: pro residues. Lys275 is subject to N6-acetyllysine. Residues Leu277–Glu286 are compositionally biased toward basic and acidic residues. Residue Lys280 forms a Glycyl lysine isopeptide (Lys-Gly) (interchain with G-Cter in SUMO2) linkage. Ser289 carries the phosphoserine modification. Position 298 is a phosphothreonine (Thr298). Ser307 and Ser309 each carry phosphoserine. Position 311 is a phosphothreonine (Thr311). Position 317 is a phosphoserine (Ser317). The segment covering Glu322–Arg338 has biased composition (basic residues). The span at Ser347–Gly359 shows a compositional bias: basic and acidic residues. Ser360 and Ser362 each carry phosphoserine. Residues Lys400 and Lys412 each participate in a glycyl lysine isopeptide (Lys-Gly) (interchain with G-Cter in SUMO2) cross-link. 2 stretches are compositionally biased toward basic and acidic residues: residues Lys400–Glu414 and Lys422–Ser431. The required for interaction with PRMT9 stretch occupies residues Lys401–Lys550. Residues Ser431, Ser435, and Ser436 each carry the phosphoserine modification. Lys492 participates in a covalent cross-link: Glycyl lysine isopeptide (Lys-Gly) (interchain with G-Cter in SUMO2). Omega-N-methylarginine; by PRMT9; alternate is present on Arg508. The residue at position 508 (Arg508) is a Symmetric dimethylarginine; by PRMT9; alternate. Arg515 is subject to Omega-N-methylarginine. Lys543 participates in a covalent cross-link: Glycyl lysine isopeptide (Lys-Gly) (interchain with G-Cter in SUMO2). Residues Ala691 to Gly757 form a disordered region. Positions Glu712–Pro732 are enriched in acidic residues. Lys770 participates in a covalent cross-link: Glycyl lysine isopeptide (Lys-Gly) (interchain with G-Cter in SUMO2). Thr780 carries the phosphothreonine modification. Residues Lys790, Lys843, and Lys857 each participate in a glycyl lysine isopeptide (Lys-Gly) (interchain with G-Cter in SUMO2) cross-link. Residues Tyr844 to Ala869 show a composition bias toward basic and acidic residues. Positions Tyr844–Phe895 are disordered. Ser861 is subject to Phosphoserine.

In terms of assembly, component of the 17S U2 SnRNP complex, a ribonucleoprotein complex that contains small nuclear RNA (snRNA) U2 and a number of specific proteins. Part of the SF3B subcomplex of the 17S U2 SnRNP complex. SF3B associates with the splicing subcomplex SF3A and a 12S RNA unit to form the U2 small nuclear ribonucleoproteins complex (U2 snRNP). Within the SF3B complex, interacts directly with SF3B4. Found in a complex with PRMT9, SF3B2 and SF3B4. Interacts (Arg-508-methylated form) with SMN1 (via Tudor domain). Interacts with RBM7. Interacts with ERCC6. Component of the minor spliceosome. Within this complex, interacts with SCNM1 and CRIPT. As to quaternary structure, (Microbial infection) Interacts with HIV-1 Vpr. Post-translationally, methylation at Arg-508 by PRMT9 is required for the interaction with SMN1.

It is found in the nucleus. The protein localises to the nucleus speckle. Its function is as follows. Component of the 17S U2 SnRNP complex of the spliceosome, a large ribonucleoprotein complex that removes introns from transcribed pre-mRNAs. The 17S U2 SnRNP complex (1) directly participates in early spliceosome assembly and (2) mediates recognition of the intron branch site during pre-mRNA splicing by promoting the selection of the pre-mRNA branch-site adenosine, the nucleophile for the first step of splicing. Within the 17S U2 SnRNP complex, SF3B2 is part of the SF3B subcomplex, which is required for 'A' complex assembly formed by the stable binding of U2 snRNP to the branchpoint sequence in pre-mRNA. Sequence independent binding of SF3A and SF3B subcomplexes upstream of the branch site is essential, it may anchor U2 snRNP to the pre-mRNA. May also be involved in the assembly of the 'E' complex. Also acts as a component of the minor spliceosome, which is involved in the splicing of U12-type introns in pre-mRNAs. This Homo sapiens (Human) protein is Splicing factor 3B subunit 2 (SF3B2).